The chain runs to 663 residues: DNA ligase 1 (663 aa).

Residues 30–34 (DAEYD) and 78–79 (SL) contribute to the NAD(+) site. Lys-105 serves as the catalytic N6-AMP-lysine intermediate. NAD(+) is bound by residues Arg-126, Glu-161, and Lys-294. Zn(2+) is bound by residues Cys-389, Cys-392, Cys-407, and Cys-412. One can recognise a BRCT domain in the interval 574-663 (AAGAPLAGKT…WAQLIEAKLV (90 aa)).

This sequence belongs to the NAD-dependent DNA ligase family. LigA subfamily. Mg(2+) serves as cofactor. It depends on Mn(2+) as a cofactor.

The catalysed reaction is NAD(+) + (deoxyribonucleotide)n-3'-hydroxyl + 5'-phospho-(deoxyribonucleotide)m = (deoxyribonucleotide)n+m + AMP + beta-nicotinamide D-nucleotide.. In terms of biological role, DNA ligase that catalyzes the formation of phosphodiester linkages between 5'-phosphoryl and 3'-hydroxyl groups in double-stranded DNA using NAD as a coenzyme and as the energy source for the reaction. It is essential for DNA replication and repair of damaged DNA. In Nocardia farcinica (strain IFM 10152), this protein is DNA ligase 1.